Consider the following 163-residue polypeptide: Globin CTT-Z (163 aa).

A signal peptide spans 1 to 16; the sequence is MKFFAVLALCIVGAIA. One can recognise a Globin domain in the interval 18 to 162; sequence PLTSDEAALV…VYTAVFQIVT (145 aa). Heme b contacts are provided by His-76 and His-111.

The protein belongs to the globin family.

The protein is Globin CTT-Z (CTT-Z) of Chironomus thummi thummi (Midge).